Here is a 460-residue protein sequence, read N- to C-terminus: Piperamide synthase (460 aa).

Residues 1-23 are disordered; it reads MASSQLEFNVERKQPELLGPAEP. Residues histidine 168 and aspartate 383 each act as proton acceptor in the active site. The Microbody targeting signal signature appears at 458–460; the sequence is SRM.

It belongs to the plant acyltransferase family. Monomer. As to expression, confined to immature fruits perisperm. Also detectable in roots.

Its subcellular location is the cytoplasm. The catalysed reaction is piperidine + (E,E)-piperoyl-CoA = piperine + CoA + H(+). It participates in aromatic compound metabolism. Its function is as follows. Involved in the biosynthesis of aromatic piperamides natural products such as piperine (1-piperoyl-piperidine), the pungent principle contributing, together with several terpenoids, to the aromatic properties of black pepper fruits, and displaying numerous pharmacological activities such as antiproliferative, antitumor, antiangiogenesis, antioxidant, antidiabetic, antiobesity, cardioprotective, antimicrobial, antiaging, and immunomodulatory effects. Can use piperidine and benzylamine as acceptors and various CoA-esters with aliphatic and aromatic amines as CoA-donors, including piperoyl-CoA, hexanoyl-CoA and octanoyl-CoA, and, to a lower extent, benzoyl-CoA. Mediates the conversion of piperidine to three piperine isomers in the presence of piperoyl-CoA. Its ability to convert in vitro piperidine to hexanoylpiperidine in the presence of hexanoyl-CoA, and to octanoylpiperidine in the presence of octanoyl-CoA is not confirmed in vivo according to fruits metabolome analysis. The sequence is that of Piperamide synthase from Piper nigrum (Black pepper).